Here is a 331-residue protein sequence, read N- to C-terminus: 4-hydroxythreonine-4-phosphate dehydrogenase (331 aa).

Substrate is bound by residues H137 and T138. A divalent metal cation is bound by residues H167, H212, and H267. Substrate is bound by residues K275, N284, and R293.

Belongs to the PdxA family. Homodimer. Zn(2+) is required as a cofactor. Requires Mg(2+) as cofactor. Co(2+) serves as cofactor.

Its subcellular location is the cytoplasm. It carries out the reaction 4-(phosphooxy)-L-threonine + NAD(+) = 3-amino-2-oxopropyl phosphate + CO2 + NADH. The protein operates within cofactor biosynthesis; pyridoxine 5'-phosphate biosynthesis; pyridoxine 5'-phosphate from D-erythrose 4-phosphate: step 4/5. Functionally, catalyzes the NAD(P)-dependent oxidation of 4-(phosphooxy)-L-threonine (HTP) into 2-amino-3-oxo-4-(phosphooxy)butyric acid which spontaneously decarboxylates to form 3-amino-2-oxopropyl phosphate (AHAP). The polypeptide is 4-hydroxythreonine-4-phosphate dehydrogenase (Yersinia enterocolitica serotype O:8 / biotype 1B (strain NCTC 13174 / 8081)).